The sequence spans 316 residues: Tetrahydromethanopterin S-methyltransferase subunit H (316 aa).

This sequence belongs to the MtrH family. The complex is composed of 8 subunits; MtrA, MtrB, MtrC, MtrD, MtrE, MtrF, MtrG and MtrH.

The catalysed reaction is 5-methyl-5,6,7,8-tetrahydromethanopterin + coenzyme M + 2 Na(+)(in) = 5,6,7,8-tetrahydromethanopterin + methyl-coenzyme M + 2 Na(+)(out). It functions in the pathway one-carbon metabolism; methanogenesis from CO(2); methyl-coenzyme M from 5,10-methylene-5,6,7,8-tetrahydromethanopterin: step 2/2. Its function is as follows. Part of a complex that catalyzes the formation of methyl-coenzyme M and tetrahydromethanopterin from coenzyme M and methyl-tetrahydromethanopterin. This is an energy-conserving, sodium-ion translocating step. MtrH catalyzes the transfer of the methyl group from methyl-tetrahydromethanopterin to the corrinoid prosthetic group of MtrA. This Methanosarcina barkeri (strain Fusaro / DSM 804) protein is Tetrahydromethanopterin S-methyltransferase subunit H.